A 529-amino-acid polypeptide reads, in one-letter code: MTLSPYLQEVAKRRTFAIISHPDAGKTTITEKVLLFGQAIQTAGTVKGRGSSQHAKSDWMEMEKQRGISITTSVMQFPYHDCLVNLLDTPGHEDFSEDTYRTLTAVDCCLMVIDAAKGVEDRTRKLMEVTRLRDTPILTFMNKLDRDIRDPMELLDEVENELKIGCAPITWPIGCGKLFKGVYHLYKDETYLYQTGKGHTIQEVRIVKGLNNPDLDAAVGEDLAQQLRDELELVQGASNEFDEELFLAGEITPVFFGTALGNFGVDHMLDGLVAWAPAPMPRQTDTRTVEASEEKFTGFVFKIQANMDPKHRDRVAFMRVVSGKYEKGMKLRQVRIGKDVVISDALTFMAGDRSHVEEAYPGDILGLHNHGTIQIGDTFTQGEMMKFTGIPNFAPELFRRIRLKDPLKQKQLLKGLVQLSEEGAVQVFRPISNNDLIVGAVGVLQFDVVVARLKSEYNVEAIYESVNVATARWVESADAKKFEEFKRKNETQLALDGGDNLTYIAPTMVNLNLTQERYPDVQFRKTREH.

A tr-type G domain is found at alanine 11–methionine 280. GTP contacts are provided by residues serine 20–threonine 27, aspartate 88–histidine 92, and asparagine 142–aspartate 145.

Belongs to the TRAFAC class translation factor GTPase superfamily. Classic translation factor GTPase family. PrfC subfamily.

It is found in the cytoplasm. In terms of biological role, increases the formation of ribosomal termination complexes and stimulates activities of RF-1 and RF-2. It binds guanine nucleotides and has strong preference for UGA stop codons. It may interact directly with the ribosome. The stimulation of RF-1 and RF-2 is significantly reduced by GTP and GDP, but not by GMP. This chain is Peptide chain release factor 3, found in Salmonella gallinarum (strain 287/91 / NCTC 13346).